The sequence spans 139 residues: von Hippel-Lindau-like protein (139 aa).

Positions 1-22 (MPWRAGNGVGLEAQAGTQEAGP) are disordered. The interval 54–135 (SRIIICNHSP…GQPVFANITL (82 aa)) is beta-domain.

Belongs to the VHL family. As to quaternary structure, interacts via the beta domain with the ODD domain of HIF1A. This interaction is independent of prolyl hydroxylation of HIF1A. In terms of tissue distribution, abundantly expressed in the placenta.

In terms of biological role, functions as a dominant-negative VHL to serve as a protector of HIFalpha. The protein is von Hippel-Lindau-like protein (VHLL) of Homo sapiens (Human).